Reading from the N-terminus, the 217-residue chain is Putative 3-methyladenine DNA glycosylase (217 aa).

The RPE2 insert domain maps to 105 to 145 (SHNNVYTIDTAKIKSQITDEKTQSIIIRKNRRIMKFYIPNL).

It belongs to the DNA glycosylase MPG family.

The sequence is that of Putative 3-methyladenine DNA glycosylase from Rickettsia prowazekii (strain Madrid E).